The primary structure comprises 633 residues: Chaperone protein HtpG (633 aa).

Positions 1–341 (MTAPHETMSF…SADLPLNVSR (341 aa)) are a; substrate-binding. The segment at 342–562 (ELLQESRDVK…EGDMSGYLQR (221 aa)) is b. A c region spans residues 563-633 (LLKQAGQKAP…YVQRVNKLLA (71 aa)).

Belongs to the heat shock protein 90 family. In terms of assembly, homodimer.

It localises to the cytoplasm. Functionally, molecular chaperone. Has ATPase activity. The polypeptide is Chaperone protein HtpG (Cupriavidus taiwanensis (strain DSM 17343 / BCRC 17206 / CCUG 44338 / CIP 107171 / LMG 19424 / R1) (Ralstonia taiwanensis (strain LMG 19424))).